The chain runs to 77 residues: U10-lycotoxin-Ls1b (77 aa).

The first 20 residues, 1-20 (MKLIIFTGLVLFAIVSLIEA), serve as a signal peptide directing secretion. Positions 21 to 26 (EEESGR) are excised as a propeptide.

It belongs to the neurotoxin 19 (CSTX) family. 09 (U10-Lctx) subfamily. In terms of processing, contains 4 disulfide bonds. As to expression, expressed by the venom gland.

It localises to the secreted. The protein is U10-lycotoxin-Ls1b of Lycosa singoriensis (Wolf spider).